The primary structure comprises 483 residues: Cobyric acid synthase (483 aa).

A GATase cobBQ-type domain is found at 251–438; sequence ALIVAVPMLP…LHGVFSADRF (188 aa). The active-site Nucleophile is the cysteine 333. Histidine 430 is an active-site residue.

Belongs to the CobB/CobQ family. CobQ subfamily.

It participates in cofactor biosynthesis; adenosylcobalamin biosynthesis. Its function is as follows. Catalyzes amidations at positions B, D, E, and G on adenosylcobyrinic A,C-diamide. NH(2) groups are provided by glutamine, and one molecule of ATP is hydrogenolyzed for each amidation. In Brucella suis (strain ATCC 23445 / NCTC 10510), this protein is Cobyric acid synthase.